The sequence spans 347 residues: S-adenosylmethionine:tRNA ribosyltransferase-isomerase (347 aa).

This sequence belongs to the QueA family. In terms of assembly, monomer.

The protein localises to the cytoplasm. The enzyme catalyses 7-aminomethyl-7-carbaguanosine(34) in tRNA + S-adenosyl-L-methionine = epoxyqueuosine(34) in tRNA + adenine + L-methionine + 2 H(+). Its pathway is tRNA modification; tRNA-queuosine biosynthesis. Transfers and isomerizes the ribose moiety from AdoMet to the 7-aminomethyl group of 7-deazaguanine (preQ1-tRNA) to give epoxyqueuosine (oQ-tRNA). The sequence is that of S-adenosylmethionine:tRNA ribosyltransferase-isomerase from Pseudomonas paraeruginosa (strain DSM 24068 / PA7) (Pseudomonas aeruginosa (strain PA7)).